A 428-amino-acid polypeptide reads, in one-letter code: C4-dicarboxylate transport protein (428 aa).

A run of 8 helical transmembrane segments spans residues 8–28, 44–64, 76–96, 142–162, 184–204, 222–242, 326–346, and 352–372; these read SLYF…HFYP, LIKM…IAGM, VALL…LIIV, IGAF…LFGF, VIFG…FGAM, LIIC…GSIA, IFHQ…AAGV, and IVLA…LALI.

It belongs to the dicarboxylate/amino acid:cation symporter (DAACS) (TC 2.A.23) family.

It localises to the cell inner membrane. In terms of biological role, responsible for the transport of dicarboxylates such as succinate, fumarate, and malate from the periplasm across the membrane. The chain is C4-dicarboxylate transport protein from Enterobacter sp. (strain 638).